A 581-amino-acid chain; its full sequence is Arginine--tRNA ligase (581 aa).

The short motif at 126-136 (PNLAKEMHVGH) is the 'HIGH' region element.

The protein belongs to the class-I aminoacyl-tRNA synthetase family. As to quaternary structure, monomer.

It localises to the cytoplasm. The catalysed reaction is tRNA(Arg) + L-arginine + ATP = L-arginyl-tRNA(Arg) + AMP + diphosphate. The chain is Arginine--tRNA ligase from Shewanella loihica (strain ATCC BAA-1088 / PV-4).